The sequence spans 89 residues: Small ribosomal subunit protein uS19 (89 aa).

This sequence belongs to the universal ribosomal protein uS19 family.

Functionally, protein S19 forms a complex with S13 that binds strongly to the 16S ribosomal RNA. The chain is Small ribosomal subunit protein uS19 from Stenotrophomonas maltophilia (strain R551-3).